A 277-amino-acid polypeptide reads, in one-letter code: Glycerol-3-phosphate acyltransferase (277 aa).

Helical transmembrane passes span 3–23 (LFIFLILVGYLMGSINSAIIV), 55–75 (IMVMVFDALKGILPVILAKFL), 79–99 (PVTVAFTALAAVVGHMYPVFF), 111–131 (IGALLAFHFIIGVMVAATWLL), and 155–175 (LILVGNLNIFPPLFMITILVL). The disordered stretch occupies residues 207–277 (SPATSAEQEF…PKTKTVKEKE (71 aa)). Residues 216–239 (FPGKEVIDTNIDETEKTEQAEAVK) show a composition bias toward basic and acidic residues. Basic residues-rich tracts occupy residues 240-253 (KPKVKKATTKAKKT) and 262-271 (KPKSTKPKTK).

Belongs to the PlsY family. Probably interacts with PlsX.

It localises to the cell inner membrane. It carries out the reaction an acyl phosphate + sn-glycerol 3-phosphate = a 1-acyl-sn-glycero-3-phosphate + phosphate. It participates in lipid metabolism; phospholipid metabolism. Functionally, catalyzes the transfer of an acyl group from acyl-phosphate (acyl-PO(4)) to glycerol-3-phosphate (G3P) to form lysophosphatidic acid (LPA). This enzyme utilizes acyl-phosphate as fatty acyl donor, but not acyl-CoA or acyl-ACP. The protein is Glycerol-3-phosphate acyltransferase of Legionella pneumophila subsp. pneumophila (strain Philadelphia 1 / ATCC 33152 / DSM 7513).